Here is a 98-residue protein sequence, read N- to C-terminus: NADH-ubiquinone oxidoreductase chain 4L (98 aa).

Transmembrane regions (helical) follow at residues 2–22 (PSIS…MLMF), 29–49 (SLLC…LTIL), and 61–81 (ILLL…LVMV).

It belongs to the complex I subunit 4L family. In terms of assembly, core subunit of respiratory chain NADH dehydrogenase (Complex I) which is composed of 45 different subunits.

The protein localises to the mitochondrion inner membrane. The enzyme catalyses a ubiquinone + NADH + 5 H(+)(in) = a ubiquinol + NAD(+) + 4 H(+)(out). Core subunit of the mitochondrial membrane respiratory chain NADH dehydrogenase (Complex I) which catalyzes electron transfer from NADH through the respiratory chain, using ubiquinone as an electron acceptor. Part of the enzyme membrane arm which is embedded in the lipid bilayer and involved in proton translocation. This is NADH-ubiquinone oxidoreductase chain 4L (MT-ND4L) from Microcebus mittermeieri (Mittermeier's mouse lemur).